The following is a 100-amino-acid chain: Putative pterin-4-alpha-carbinolamine dehydratase 2 (100 aa).

The protein belongs to the pterin-4-alpha-carbinolamine dehydratase family.

It carries out the reaction (4aS,6R)-4a-hydroxy-L-erythro-5,6,7,8-tetrahydrobiopterin = (6R)-L-erythro-6,7-dihydrobiopterin + H2O. The sequence is that of Putative pterin-4-alpha-carbinolamine dehydratase 2 from Cupriavidus pinatubonensis (strain JMP 134 / LMG 1197) (Cupriavidus necator (strain JMP 134)).